A 214-amino-acid polypeptide reads, in one-letter code: STS14 protein (214 aa).

Positions 1-19 (MFVLSTAMACLVYIYIYIY) are cleaved as a signal peptide. A run of 3 repeats spans residues 13–14 (YI), 15–16 (YI), and 17–18 (YI). The segment at 13-18 (YIYIYI) is 3 X 2 AA tandem repeats of Y-I. The region spanning 80-200 (LDAHNKARSE…YEGPATLTVC (121 aa)) is the SCP domain.

It belongs to the CRISP family. Highly expressed in the stigma and stylar cortex throughout pistil development. Not expressed in other organs.

Functionally, may protect the outer tissues of the pistil from pathogen attack. This is STS14 protein (STS14) from Solanum tuberosum (Potato).